The following is a 156-amino-acid chain: uncharacterized protein (156 aa).

This sequence to L.lactis TrpF C-terminal region.

This is an uncharacterized protein from Bacillus subtilis (strain 168).